Here is a 57-residue protein sequence, read N- to C-terminus: Kunitz-type serine protease inhibitor 2 (57 aa).

Positions 5–55 constitute a BPTI/Kunitz inhibitor domain; sequence CELPAETGLCKARIRSFHYNRAAQQCLEFIYGGCGGNANRFKTIDECHRTC. 3 cysteine pairs are disulfide-bonded: cysteine 5–cysteine 55, cysteine 14–cysteine 38, and cysteine 30–cysteine 51.

It belongs to the venom Kunitz-type family. Expressed by the venom gland.

It is found in the secreted. Its function is as follows. Serine protease inhibitor. This is Kunitz-type serine protease inhibitor 2 from Naja nivea (Cape cobra).